A 233-amino-acid chain; its full sequence is Modulator of macroautophagy TMEM150B (233 aa).

The Cytoplasmic portion of the chain corresponds to 1–7 (MWGYLSL). Residues 8-28 (MPVFLAVWAISGVWIVFAIAV) traverse the membrane as a helical segment. Over 29–51 (TNRTVDLSKGFPYISICGSFPPQ) the chain is Extracellular. The N-linked (GlcNAc...) asparagine glycan is linked to asparagine 30. Residues 52 to 72 (SCIFSQVLNMGAALAAWICIV) traverse the membrane as a helical segment. The Cytoplasmic segment spans residues 73 to 84 (RYHQLRDWGVRR). The chain crosses the membrane as a helical span at residues 85-105 (WPNQLILWTGLLCALGTSVVG). Residues 106 to 116 (NFQEKNQRPTH) are Extracellular-facing. Residues 117–137 (LAGAFLAFILGNVYFWLQLLL) traverse the membrane as a helical segment. The Cytoplasmic portion of the chain corresponds to 138 to 155 (WRLKRLPQPGAAWIGPLR). The helical transmembrane segment at 156–176 (LGLCSVCTILIVAMIVLHACS) threads the bilayer. At 177-185 (LRSVSAACE) the chain is on the extracellular side. A helical transmembrane segment spans residues 186 to 206 (WVVAMLLFALFGLLAVDFSAL). At 207–233 (ESCTLCVQPWPSLSPPPASPISLPVQL) the chain is on the cytoplasmic side.

It belongs to the DRAM/TMEM150 family. In terms of tissue distribution, highly expressed in the colon and lung with comparatively high levels also detectable in the lymph nodes, placenta, duodenum, peripheral blood mononuclear cells and spleen.

It localises to the cell membrane. It is found in the endosome membrane. The protein resides in the cytoplasmic vesicle. Its subcellular location is the autophagosome membrane. Modulator of macroautophagy that causes accumulation of autophagosomes under basal conditions and enhances autophagic flux. Represses cell death and promotes long-term clonogenic survival of cells grown in the absence of glucose in a macroautophagy-independent manner. May have some role in extracellular matrix engulfment or growth factor receptor recycling, both of which can modulate cell survival. This is Modulator of macroautophagy TMEM150B from Homo sapiens (Human).